Reading from the N-terminus, the 382-residue chain is Deoxyhypusine synthase (382 aa).

NAD(+)-binding positions include 108 to 112 (SNLIS), 134 to 136 (TAG), glutamate 140, and aspartate 257. 139-140 (EE) serves as a coordination point for spermidine. Position 262 (aspartate 262) interacts with spermidine. Glycine 304 lines the NAD(+) pocket. Histidine 309 is a binding site for spermidine. Position 329-330 (329-330 (TG)) interacts with NAD(+). Spermidine contacts are provided by residues 335–337 (GSD) and 344–350 (EAVSWGK). The active-site Nucleophile is lysine 350. 363–364 (DV) is a binding site for NAD(+).

This sequence belongs to the deoxyhypusine synthase family. It depends on NAD(+) as a cofactor.

The catalysed reaction is [eIF5A protein]-L-lysine + spermidine = [eIF5A protein]-deoxyhypusine + propane-1,3-diamine. Its pathway is protein modification; eIF5A hypusination. Functionally, catalyzes the NAD-dependent oxidative cleavage of spermidine and the subsequent transfer of the butylamine moiety of spermidine to the epsilon-amino group of a specific lysine residue of the eIF-5A precursor protein to form the intermediate deoxyhypusine residue. This is Deoxyhypusine synthase (DYS1) from Eremothecium gossypii (strain ATCC 10895 / CBS 109.51 / FGSC 9923 / NRRL Y-1056) (Yeast).